The sequence spans 475 residues: Ribulose bisphosphate carboxylase large chain (475 aa).

A propeptide spanning residues 1–2 (MA) is cleaved from the precursor. At proline 3 the chain carries N-acetylproline. The residue at position 14 (lysine 14) is an N6,N6,N6-trimethyllysine. Substrate-binding residues include asparagine 123 and threonine 173. Lysine 175 (proton acceptor) is an active-site residue. Substrate is bound at residue lysine 177. Mg(2+)-binding residues include lysine 201, aspartate 203, and glutamate 204. Residue lysine 201 is modified to N6-carboxylysine. Histidine 294 acts as the Proton acceptor in catalysis. Residues arginine 295, histidine 327, and serine 379 each coordinate substrate.

Belongs to the RuBisCO large chain family. Type I subfamily. Heterohexadecamer of 8 large chains and 8 small chains; disulfide-linked. The disulfide link is formed within the large subunit homodimers. Mg(2+) is required as a cofactor. In terms of processing, the disulfide bond which can form in the large chain dimeric partners within the hexadecamer appears to be associated with oxidative stress and protein turnover.

It is found in the plastid. Its subcellular location is the chloroplast. It catalyses the reaction 2 (2R)-3-phosphoglycerate + 2 H(+) = D-ribulose 1,5-bisphosphate + CO2 + H2O. It carries out the reaction D-ribulose 1,5-bisphosphate + O2 = 2-phosphoglycolate + (2R)-3-phosphoglycerate + 2 H(+). In terms of biological role, ruBisCO catalyzes two reactions: the carboxylation of D-ribulose 1,5-bisphosphate, the primary event in carbon dioxide fixation, as well as the oxidative fragmentation of the pentose substrate in the photorespiration process. Both reactions occur simultaneously and in competition at the same active site. The polypeptide is Ribulose bisphosphate carboxylase large chain (Oedogonium cardiacum (Filamentous green alga)).